A 413-amino-acid polypeptide reads, in one-letter code: Arginine biosynthesis bifunctional protein ArgJ (413 aa).

Substrate-binding residues include threonine 158, lysine 184, threonine 195, glutamate 285, asparagine 408, and serine 413. Residue threonine 195 is the Nucleophile of the active site.

The protein belongs to the ArgJ family. In terms of assembly, heterotetramer of two alpha and two beta chains.

It localises to the cytoplasm. It carries out the reaction N(2)-acetyl-L-ornithine + L-glutamate = N-acetyl-L-glutamate + L-ornithine. The enzyme catalyses L-glutamate + acetyl-CoA = N-acetyl-L-glutamate + CoA + H(+). It participates in amino-acid biosynthesis; L-arginine biosynthesis; L-ornithine and N-acetyl-L-glutamate from L-glutamate and N(2)-acetyl-L-ornithine (cyclic): step 1/1. It functions in the pathway amino-acid biosynthesis; L-arginine biosynthesis; N(2)-acetyl-L-ornithine from L-glutamate: step 1/4. Catalyzes two activities which are involved in the cyclic version of arginine biosynthesis: the synthesis of N-acetylglutamate from glutamate and acetyl-CoA as the acetyl donor, and of ornithine by transacetylation between N(2)-acetylornithine and glutamate. This is Arginine biosynthesis bifunctional protein ArgJ from Bradyrhizobium diazoefficiens (strain JCM 10833 / BCRC 13528 / IAM 13628 / NBRC 14792 / USDA 110).